Reading from the N-terminus, the 729-residue chain is Catalase-peroxidase (729 aa).

Positions 95–218 form a cross-link, tryptophyl-tyrosyl-methioninium (Trp-Tyr) (with M-244); it reads WHSAGTYRGA…LAAVEMGLVY (124 aa). His-96 (proton acceptor) is an active-site residue. The segment at residues 218–244 is a cross-link (tryptophyl-tyrosyl-methioninium (Tyr-Met) (with W-95)); sequence YVNPEGPHGHPDPVASGPDVRDTFARM. His-259 provides a ligand contact to heme b.

Belongs to the peroxidase family. Peroxidase/catalase subfamily. As to quaternary structure, homodimer or homotetramer. Heme b is required as a cofactor. Formation of the three residue Trp-Tyr-Met cross-link is important for the catalase, but not the peroxidase activity of the enzyme.

The catalysed reaction is H2O2 + AH2 = A + 2 H2O. The enzyme catalyses 2 H2O2 = O2 + 2 H2O. In terms of biological role, bifunctional enzyme with both catalase and broad-spectrum peroxidase activity. The chain is Catalase-peroxidase from Synechococcus sp. (strain CC9605).